We begin with the raw amino-acid sequence, 298 residues long: Aspartate carbamoyltransferase catalytic subunit (298 aa).

Carbamoyl phosphate is bound by residues Arg-54 and Thr-55. Lys-82 serves as a coordination point for L-aspartate. Carbamoyl phosphate contacts are provided by Arg-104, His-132, and Gln-135. 2 residues coordinate L-aspartate: Arg-165 and Arg-218. Carbamoyl phosphate contacts are provided by Gly-260 and Pro-261.

This sequence belongs to the aspartate/ornithine carbamoyltransferase superfamily. ATCase family. In terms of assembly, heterododecamer (2C3:3R2) of six catalytic PyrB chains organized as two trimers (C3), and six regulatory PyrI chains organized as three dimers (R2).

The catalysed reaction is carbamoyl phosphate + L-aspartate = N-carbamoyl-L-aspartate + phosphate + H(+). Its pathway is pyrimidine metabolism; UMP biosynthesis via de novo pathway; (S)-dihydroorotate from bicarbonate: step 2/3. Functionally, catalyzes the condensation of carbamoyl phosphate and aspartate to form carbamoyl aspartate and inorganic phosphate, the committed step in the de novo pyrimidine nucleotide biosynthesis pathway. This Wolbachia sp. subsp. Brugia malayi (strain TRS) protein is Aspartate carbamoyltransferase catalytic subunit.